A 563-amino-acid chain; its full sequence is Arginine--tRNA ligase (563 aa).

A 'HIGH' region motif is present at residues 134 to 144 (ANPTGLLHMGN).

This sequence belongs to the class-I aminoacyl-tRNA synthetase family. Monomer.

The protein localises to the cytoplasm. It catalyses the reaction tRNA(Arg) + L-arginine + ATP = L-arginyl-tRNA(Arg) + AMP + diphosphate. The sequence is that of Arginine--tRNA ligase from Heliobacterium modesticaldum (strain ATCC 51547 / Ice1).